The primary structure comprises 93 residues: Small ribosomal subunit protein uS19 (93 aa).

2 disordered regions span residues 1–25 and 74–93; these read MPRS…QNTK and FAPT…ARRR. Composition is skewed to basic and acidic residues over residues 14 to 23 and 81 to 93; these read HLQKKVDDQN and RGHD…ARRR.

It belongs to the universal ribosomal protein uS19 family.

In terms of biological role, protein S19 forms a complex with S13 that binds strongly to the 16S ribosomal RNA. This chain is Small ribosomal subunit protein uS19, found in Beutenbergia cavernae (strain ATCC BAA-8 / DSM 12333 / CCUG 43141 / JCM 11478 / NBRC 16432 / NCIMB 13614 / HKI 0122).